Reading from the N-terminus, the 208-residue chain is FMN-dependent NADH:quinone oxidoreductase 1 (208 aa).

17-19 (SVS) provides a ligand contact to FMN.

The protein belongs to the azoreductase type 1 family. Homodimer. The cofactor is FMN.

It carries out the reaction 2 a quinone + NADH + H(+) = 2 a 1,4-benzosemiquinone + NAD(+). The enzyme catalyses N,N-dimethyl-1,4-phenylenediamine + anthranilate + 2 NAD(+) = 2-(4-dimethylaminophenyl)diazenylbenzoate + 2 NADH + 2 H(+). Its function is as follows. Quinone reductase that provides resistance to thiol-specific stress caused by electrophilic quinones. Also exhibits azoreductase activity. Catalyzes the reductive cleavage of the azo bond in aromatic azo compounds to the corresponding amines. In Listeria innocua serovar 6a (strain ATCC BAA-680 / CLIP 11262), this protein is FMN-dependent NADH:quinone oxidoreductase 1.